The primary structure comprises 115 residues: NADH-ubiquinone oxidoreductase chain 3 (115 aa).

A run of 3 helical transmembrane segments spans residues 4–24 (LMAL…AFWL), 55–75 (FFLV…LLPL), and 86–106 (TMML…AYEW).

This sequence belongs to the complex I subunit 3 family. Core subunit of respiratory chain NADH dehydrogenase (Complex I) which is composed of 45 different subunits. Interacts with TMEM186. Interacts with TMEM242.

It localises to the mitochondrion inner membrane. It carries out the reaction a ubiquinone + NADH + 5 H(+)(in) = a ubiquinol + NAD(+) + 4 H(+)(out). Functionally, core subunit of the mitochondrial membrane respiratory chain NADH dehydrogenase (Complex I) which catalyzes electron transfer from NADH through the respiratory chain, using ubiquinone as an electron acceptor. Essential for the catalytic activity of complex I. In Peromyscus gossypinus (Cotton deermouse), this protein is NADH-ubiquinone oxidoreductase chain 3.